The chain runs to 522 residues: Cytochrome P450 9c1 (522 aa).

Cysteine 464 is a binding site for heme.

Belongs to the cytochrome P450 family. Heme is required as a cofactor.

The protein localises to the endoplasmic reticulum membrane. It localises to the microsome membrane. Its function is as follows. May be involved in the metabolism of insect hormones and in the breakdown of synthetic insecticides. This Drosophila melanogaster (Fruit fly) protein is Cytochrome P450 9c1 (Cyp9c1).